A 340-amino-acid chain; its full sequence is 4-amino-5-hydroxymethyl-2-methylpyrimidine phosphate synthase THI11 (340 aa).

Position 62 is an N6-(pyridoxal phosphate)lysine (K62). H66 is an active-site residue. Residue 115 to 118 (GEFG) coordinates pyridoxal 5'-phosphate. The short motif at 195–199 (CCCFC) is the CCCFC; essential for catalytic activity, may be the site of iron coordination element.

Belongs to the NMT1/THI5 family. Homodimer. The cofactor is Fe cation.

It carries out the reaction N(6)-(pyridoxal phosphate)-L-lysyl-[4-amino-5-hydroxymethyl-2-methylpyrimidine phosphate synthase] + L-histidyl-[4-amino-5-hydroxymethyl-2-methylpyrimidine phosphate synthase] + 2 Fe(3+) + 4 H2O = L-lysyl-[4-amino-5-hydroxymethyl-2-methylpyrimidine phosphate synthase] + (2S)-2-amino-5-hydroxy-4-oxopentanoyl-[4-amino-5-hydroxymethyl-2-methylpyrimidine phosphate synthase] + 4-amino-2-methyl-5-(phosphooxymethyl)pyrimidine + 3-oxopropanoate + 2 Fe(2+) + 2 H(+). Its pathway is cofactor biosynthesis; thiamine diphosphate biosynthesis. Its function is as follows. Responsible for the formation of the pyrimidine heterocycle in the thiamine biosynthesis pathway. Catalyzes the formation of hydroxymethylpyrimidine phosphate (HMP-P) from histidine and pyridoxal phosphate (PLP). The protein uses PLP and the active site histidine to form HMP-P, generating an inactive enzyme. The enzyme can only undergo a single turnover, which suggests it is a suicide enzyme. This Saccharomyces cerevisiae (strain ATCC 204508 / S288c) (Baker's yeast) protein is 4-amino-5-hydroxymethyl-2-methylpyrimidine phosphate synthase THI11.